An 835-amino-acid polypeptide reads, in one-letter code: MKVLALRHSVAQVYADTQIYLHDDSKDEYENAFLISNLTTHNILYLNYSLKTLKILNKSGIAAVEVQSPDELFALIRCNFTYDYENNIIYLHDYSYYTNNEIRTDQHWITKTDIIDYLLPGWKLTYVGYNGKNTRGHYNFSFSCQNAATDDDIIIEYIYSNELDFQNFLLRKIKERMTTSLPIARLSNRVFRDKLFPSIVNIYKKVINVGPRNESMFTFLNFPTIKQFSNGAYIVKHTIKLKQEKWLGKRVSQFDIGQYKNMLNVVTTIYYYYNLYHSKPIIYMLGSAPSHWIHDIKQYSDFTFETWDPLDTPYSTIHHKELFFYKDVNKLKDNSILYIDIRTDRKNMDWKEWRKVVEQQTVNNLNIAYKYLSTGKAKVCCVKLTAMDLELPITAKLLHHPTTEVRSEFYAILDVWDIITIKRFIPKGVFYAFINNITTENVFIQPPFKLKASPTDYIVALYALSNDFNSRQDVINLINKQKQSLITVRMNNTFKDEPKVNFKNIYDWTFLPTDFELKDSIITSYDGCLGMFGLSISLSSKPTGNNHLFIINGNDKYYKLDQYANHMGISRRSHQIRFSESATSYSGYIFRDLSNNNFNLIGTNVENSVSGHVYNALIYYRYNYAFDLKRWIYLHSIGKVAIEGGRYYEHAPIELIYACRSAREFAILQDDLTVLRYADEIEGYINKVYSITYADDPNYFIGIKFNSIPYEYDVKVPHLTLGVLFISDNMIHNVVTVLKKMKTELFKTEISTSYTYMLSDNIYVANASGVLSTYFKLYNMFYRNHITFGQSRMFIPHITLSFSTKQTVRIESTRLKINSIYLRKIKGETVFDMSE.

Residues 171–245 (RKIKERMTTS…KHTIKLKQEK (75 aa)) form an N7-methyltransferase activity region. The segment at 246-428 (WLGKRVSQFD…ITIKRFIPKG (183 aa)) is 2'-O-methyltransferase activity. Residues 429–555 (VFYAFINNIT…NHLFIINGND (127 aa)) form an N7-methyltransferase activity region. A GTase/RTPase activity region spans residues 556-692 (KYYKLDQYAN…GYINKVYSIT (137 aa)). The 2'-5'-phosphodiesterase activity stretch occupies residues 693–835 (YADDPNYFIG…KGETVFDMSE (143 aa)). Residues histidine 718, threonine 720, histidine 797, and threonine 799 each act as for 2'-5'-phosphodiesterase activity in the active site.

Belongs to the rotavirus VP3 family. Interacts with VP1. Interacts with VP2.

It localises to the virion. It carries out the reaction a 5'-end diphospho-ribonucleoside in mRNA + GTP + H(+) = a 5'-end (5'-triphosphoguanosine)-ribonucleoside in mRNA + diphosphate. The catalysed reaction is a 5'-end (5'-triphosphoguanosine)-ribonucleoside in mRNA + S-adenosyl-L-methionine = a 5'-end (N(7)-methyl 5'-triphosphoguanosine)-ribonucleoside in mRNA + S-adenosyl-L-homocysteine. It catalyses the reaction 5'-triphosphoadenylyl-(2'-&gt;5')-adenylyl-(2'-&gt;5')-adenosine + 2 H2O = 2 AMP + ATP + 2 H(+). Multifunctional enzyme involved in mRNA capping. Catalyzes the formation of the 5' cap structure on the viral plus-strand transcripts. Specifically binds to GTP and displays guanylyltransferase and methyltransferase activities. Has affinity for ssRNA but not for dsRNA. Capping activity is non-specific and caps RNAs that initiate with either a G or an A residue. Together with VP1 polymerase, forms a VP1-VP3 complex positioned near the channels situated at each of the five-fold vertices of the core. Following infection, the outermost layer of the virus is lost, leaving a double-layered particle (DLP) made up of the core and VP6 shell. VP1 then catalyzes the transcription of fully conservative plus-strand genomic RNAs that are capped by VP3 and extruded through the DLP's channels into the cytoplasm where they function as mRNAs for translation of viral proteins. DLPs probably have an RNA triphosphatase activity as well, whereas open cores do not. Its function is as follows. Counteracts the host innate immune response thanks to its phosphodiesterase that degrades the 5'-triphosphorylated, 2'-5' linked adenylate oligomers produced by the host cell IFN-inducible 2',5'-oligoadenylate synthetase (OAS). The host RNaseL is therefore not activated. The polypeptide is Protein VP3 (Rotavirus A (strain RVA/Human/United Kingdom/ST3/1975/G4P2A[6]) (RV-A)).